The primary structure comprises 100 residues: MNNMNINEMLKQAKKMQSEIELKEKELYKKEFTIEKQGLTLVLNGKREVLKIDINEALVDPEDKDILEDLLLLAFNEAMEKIDEAHKEIEKQIPSGKLPF.

This sequence belongs to the YbaB/EbfC family. In terms of assembly, homodimer.

Its subcellular location is the cytoplasm. It localises to the nucleoid. Binds to DNA and alters its conformation. May be involved in regulation of gene expression, nucleoid organization and DNA protection. The polypeptide is Nucleoid-associated protein MYPU_0500 (Mycoplasmopsis pulmonis (strain UAB CTIP) (Mycoplasma pulmonis)).